The following is a 96-amino-acid chain: Integration host factor subunit beta (96 aa).

It belongs to the bacterial histone-like protein family. In terms of assembly, heterodimer of an alpha and a beta chain.

Its function is as follows. This protein is one of the two subunits of integration host factor, a specific DNA-binding protein that functions in genetic recombination as well as in transcriptional and translational control. The sequence is that of Integration host factor subunit beta from Caulobacter vibrioides (strain ATCC 19089 / CIP 103742 / CB 15) (Caulobacter crescentus).